A 257-amino-acid polypeptide reads, in one-letter code: Protein MoaE (257 aa).

6–29 (VITGGGTGIGAACARLMHPAGERV) contacts NAD(+). The tract at residues 75–96 (LMSSSAAPAGWATAPPPRPATA) is disordered. Serine 132 is a binding site for substrate. The active-site Proton acceptor is tyrosine 145.

The protein belongs to the short-chain dehydrogenases/reductases (SDR) family.

Functionally, might catalyze the conversion of monoamine compounds or their metabolites. This chain is Protein MoaE (moaE), found in Klebsiella aerogenes (Enterobacter aerogenes).